We begin with the raw amino-acid sequence, 714 residues long: MTKAPKPAPDIATLTKAKAKVEAMRLRLEIERHNSAYYQHDAPTVSDAEYDALRRRLEAIEAKFPELVSASSPTQTVGAAPARGFAKVQHAVPMLSLGNAFADDEVTEFVERVQRFLRLDAVPSIVAEPKIDGLSLSLRYEHGELMRAATRGDGFTGEDVTANVRTIADIPTTLKAKTIPAACELRGEVYMLKQDFLALNKRQEEAGDTVFANPRNSAAGSLRQKDVAITASRPLKFFAYAWGEMSDYPMDEPTQFKMLGWLKQAGFVVNPEITLCTSVDDALAFYRRIGEQRAALPYDIDGVVYKVDRLDYQERLGFVSRSPRWAIAHKFAAEQATTVLEKIDIQVGRTGALTPVARLQPVTVGGVVVQNATLHNEDYIKGLGNDGSPLRDGVDIREGDTVVVQRAGDVIPQIVSVVLDKRPADATPYHFPHKCPVCGSHAAREEGEAVWRCTGALICPAQAVERLKHFVSRLAFDIDGLGEKQIVLFHERGWVKEPADIFTLQARNAALKLEDIEGYGETSVRNLFAAIDARRTIELHRLIFALGIRHVGEGNAKLLARHYGTLDAFLAAMRAAAEGQTEEGNTSEAYQDLDNIAGIGEVVAAAVVEFFAEPRNVAALDALLAELKDVLPAEQARRDTAVAGKTVVFTGSLTKFTRDEAKAAAERLGAKVAGSVSKKTDYVVAGADAGSKLTKAKDLGVAVLTEDEWLALIS.

NAD(+) contacts are provided by residues 47–51 (DAEYD), 96–97 (SL), and Glu-128. Lys-130 serves as the catalytic N6-AMP-lysine intermediate. The NAD(+) site is built by Arg-151, Glu-188, Lys-306, and Lys-330. Residues Cys-435, Cys-438, Cys-453, and Cys-459 each contribute to the Zn(2+) site. The 78-residue stretch at 637-714 (RRDTAVAGKT…TEDEWLALIS (78 aa)) folds into the BRCT domain.

The protein belongs to the NAD-dependent DNA ligase family. LigA subfamily. It depends on Mg(2+) as a cofactor. Mn(2+) serves as cofactor.

It carries out the reaction NAD(+) + (deoxyribonucleotide)n-3'-hydroxyl + 5'-phospho-(deoxyribonucleotide)m = (deoxyribonucleotide)n+m + AMP + beta-nicotinamide D-nucleotide.. Its function is as follows. DNA ligase that catalyzes the formation of phosphodiester linkages between 5'-phosphoryl and 3'-hydroxyl groups in double-stranded DNA using NAD as a coenzyme and as the energy source for the reaction. It is essential for DNA replication and repair of damaged DNA. The chain is DNA ligase from Rhodopseudomonas palustris (strain HaA2).